A 207-amino-acid polypeptide reads, in one-letter code: Large ribosomal subunit protein uL4 (207 aa).

Residues 45–78 (RQGTHAVKNRSARRGGGRKPWRQKGTGRARQGSI) are disordered. The segment covering 51 to 71 (VKNRSARRGGGRKPWRQKGTG) has biased composition (basic residues).

It belongs to the universal ribosomal protein uL4 family. As to quaternary structure, part of the 50S ribosomal subunit.

In terms of biological role, one of the primary rRNA binding proteins, this protein initially binds near the 5'-end of the 23S rRNA. It is important during the early stages of 50S assembly. It makes multiple contacts with different domains of the 23S rRNA in the assembled 50S subunit and ribosome. Functionally, forms part of the polypeptide exit tunnel. The protein is Large ribosomal subunit protein uL4 of Lactiplantibacillus plantarum (strain ATCC BAA-793 / NCIMB 8826 / WCFS1) (Lactobacillus plantarum).